The chain runs to 314 residues: Oxaloacetate tautomerase FAHD2A, mitochondrial (314 aa).

Residues 1 to 84 constitute a mitochondrion transit peptide; sequence MLGSSGRRLL…ATLSVVRRAL (84 aa). Mg(2+) contacts are provided by Glu-159, Glu-161, and Asp-190.

Belongs to the FAH family. Mg(2+) is required as a cofactor. It depends on Mn(2+) as a cofactor.

The protein localises to the mitochondrion. It carries out the reaction oxaloacetate = enol-oxaloacetate. In terms of biological role, tautomerase that converts enol-oxaloacetate, a strong inhibitor of succinate dehydrogenase, to the physiological keto form of oxaloacetate. It is thereby required to maximize aerobic respiration efficiency by preventing succinate dehydrogenase inhibition. In Bos taurus (Bovine), this protein is Oxaloacetate tautomerase FAHD2A, mitochondrial.